The chain runs to 328 residues: uncharacterized protein (328 aa).

Residues 72 to 91 (ALQIRDKFNLQRVIIVPDGE) constitute a DNA-binding region (H-T-H motif).

The protein belongs to the SorC transcriptional regulatory family.

This is an uncharacterized protein from Escherichia coli (strain K12).